The primary structure comprises 117 residues: Photosystem II reaction center Psb28 protein (117 aa).

It belongs to the Psb28 family. Part of the photosystem II complex.

Its subcellular location is the cellular thylakoid membrane. The chain is Photosystem II reaction center Psb28 protein from Prochlorococcus marinus (strain AS9601).